A 303-amino-acid chain; its full sequence is Energy-coupling factor transporter ATP-binding protein EcfA2 (303 aa).

The region spanning 17 to 260 (LSVSNLSCFF…EAFLAHTTII (244 aa)) is the ABC transporter domain. 54 to 61 (GDSGSGKS) is an ATP binding site.

This sequence belongs to the ABC transporter superfamily. Energy-coupling factor EcfA family. In terms of assembly, forms a stable energy-coupling factor (ECF) transporter complex composed of 2 membrane-embedded substrate-binding proteins (S component), 2 ATP-binding proteins (A component) and 2 transmembrane proteins (T component).

The protein localises to the cell membrane. In terms of biological role, ATP-binding (A) component of a common energy-coupling factor (ECF) ABC-transporter complex. Unlike classic ABC transporters this ECF transporter provides the energy necessary to transport a number of different substrates. The polypeptide is Energy-coupling factor transporter ATP-binding protein EcfA2 (Mycoplasma pneumoniae (strain ATCC 29342 / M129 / Subtype 1) (Mycoplasmoides pneumoniae)).